A 135-amino-acid chain; its full sequence is Protein Wnt-7c (135 aa).

2 disulfide bridges follow: Cys-3/Cys-17 and Cys-5/Cys-12. Ser-9 is lipidated: O-palmitoleoyl serine; by PORCN. Residues Asn-62, Asn-85, and Asn-98 are each glycosylated (N-linked (GlcNAc...) asparagine). 3 disulfides stabilise this stretch: Cys-81–Cys-112, Cys-97–Cys-107, and Cys-134–Cys-135.

The protein belongs to the Wnt family. Post-translationally, palmitoleoylation is required for efficient binding to frizzled receptors. Depalmitoleoylation leads to Wnt signaling pathway inhibition.

Its subcellular location is the secreted. It is found in the extracellular space. The protein localises to the extracellular matrix. In terms of biological role, ligand for members of the frizzled family of seven transmembrane receptors. Probable developmental protein. May be a signaling molecule which affects the development of discrete regions of tissues. Is likely to signal over only few cell diameters. The sequence is that of Protein Wnt-7c (wnt7c) from Xenopus laevis (African clawed frog).